A 260-amino-acid polypeptide reads, in one-letter code: UPF0246 protein Bamb_2261 (260 aa).

The protein belongs to the UPF0246 family.

The sequence is that of UPF0246 protein Bamb_2261 from Burkholderia ambifaria (strain ATCC BAA-244 / DSM 16087 / CCUG 44356 / LMG 19182 / AMMD) (Burkholderia cepacia (strain AMMD)).